The following is an 870-amino-acid chain: Protein RRP6-like 2 (870 aa).

The 166-residue stretch at 263 to 428 (VQEVKDLKEL…YIYDLIKLEL (166 aa)) folds into the 3'-5' exonuclease domain. The HRDC domain occupies 479–559 (NAAQLAIVAG…RQSMQHYAAF (81 aa)). Disordered stretches follow at residues 583–605 (SEKKDLHTGDVASPSLKENSSQL), 649–668 (GALLGNAASKKKSRTDEKVK), 688–775 (TEKV…EDEP), and 821–870 (FGEG…SFKN). Composition is skewed to basic and acidic residues over residues 720-729 (SKEDGVKELK) and 821-834 (FGEGHKGRQGKREA). Residues 840-849 (KGSTQEQSEF) are compositionally biased toward polar residues.

The protein resides in the nucleus. The protein localises to the nucleolus. Its subcellular location is the cytoplasm. Functionally, acts as an important epigenetic regulator through multiple silencing mechanisms. Involved in association with RRP6L1 in the silencing of the solo LTR locus. Controls levels of non-coding RNAs (ncRNAs) from the solo LTR locus. Seems to function independently of the RNA-mediated gene silencing (RdDM) pathway. Functions redundantly with RRP6L1 in the regulation of FLC locus. Participates in the maintenance of trimethylated 'Lys-27' (H3K27me3) at FLC locus via the regulation of antisense long non-coding RNAs (lncRNAs) and the regulation of diverse antisense RNAs derived from the FLC locus. Seems not involved in the exosomal RNA degradation. May be involved in poly(A)-mediated RNA degradation. The protein is Protein RRP6-like 2 of Arabidopsis thaliana (Mouse-ear cress).